A 214-amino-acid polypeptide reads, in one-letter code: Pyridoxine/pyridoxamine 5'-phosphate oxidase (214 aa).

Residues 8–11 (RLSY) and Arg66 contribute to the substrate site. Residues 61–66 (RTVLLR), 76–77 (FT), Lys83, and Gln105 contribute to the FMN site. Tyr123, Arg127, and Ser131 together coordinate substrate. Residues 126-146 (SRPRESQLAAHASDPQSAPVS) are disordered. FMN-binding positions include 141-142 (QS) and Trp187. Residue 193–195 (RMH) participates in substrate binding. Residue Arg197 participates in FMN binding.

It belongs to the pyridoxamine 5'-phosphate oxidase family. In terms of assembly, homodimer. It depends on FMN as a cofactor.

It carries out the reaction pyridoxamine 5'-phosphate + O2 + H2O = pyridoxal 5'-phosphate + H2O2 + NH4(+). The catalysed reaction is pyridoxine 5'-phosphate + O2 = pyridoxal 5'-phosphate + H2O2. Its pathway is cofactor metabolism; pyridoxal 5'-phosphate salvage; pyridoxal 5'-phosphate from pyridoxamine 5'-phosphate: step 1/1. It functions in the pathway cofactor metabolism; pyridoxal 5'-phosphate salvage; pyridoxal 5'-phosphate from pyridoxine 5'-phosphate: step 1/1. In terms of biological role, catalyzes the oxidation of either pyridoxine 5'-phosphate (PNP) or pyridoxamine 5'-phosphate (PMP) into pyridoxal 5'-phosphate (PLP). The protein is Pyridoxine/pyridoxamine 5'-phosphate oxidase of Deinococcus deserti (strain DSM 17065 / CIP 109153 / LMG 22923 / VCD115).